Reading from the N-terminus, the 1260-residue chain is Paraclostridial mosquitocidal protein 1 (1260 aa).

A Zn(2+)-binding site is contributed by H208. E209 serves as the catalytic Proton acceptor. Residues H212 and E248 each contribute to the Zn(2+) site. C395 and C406 are disulfide-bonded. The translocation domain (TD) stretch occupies residues 401–824; sequence NRVNICIDVN…NIQSIPDFDI (424 aa). The segment at 825–1065 is HCN; sequence NALIDRLGIQ…SYFNSNILRD (241 aa). The tract at residues 1066-1260 is HCC; sequence FWGEPLEYNK…FVSEDEGWKE (195 aa).

It belongs to the peptidase M27 family. Zn(2+) serves as cofactor.

The catalysed reaction is Limited hydrolysis of proteins of the neuroexocytosis apparatus, synaptobrevins, SNAP25 or syntaxin. No detected action on small molecule substrates.. Preincubation with the metalloprotease inhibitor 1,10-phenanthroline before injection into Anopheles or Aedes decreases toxicity. Neurotoxin active against Anopheles but not Aedes mosquitoes upon oral ingestion; expression of the ptox operon (ntnh-orfX1-orfX2-orfX3-pmp1) in B.thuringiensis kills Anopheles but not Aedes mosquito 3rd instar larvae. The ntnh-pmp1 construct is about half as toxic. PMP1 is toxic when injected directly into Anopheles or Aedes mosquito 3rd instar larvae, larvae no longer move, suggesting they are paralyzed. Adult mosquitoes (Anopheles or Aedes) and Drosophila lose the ability to fly in a dose-dependent manner by 24 hours after injection with 100 pg neurotoxin. Not toxic upon injection in mice. Its function is as follows. Neurotoxin that cleaves A.gambiae syntaxin 1a, probably hydrolyzing the '240-Glu-|-His-241' bond. Does not cleave A.gambiae n-synaptobrevin or SNAP-25, nor human syntaxin 1A. In terms of biological role, responsible for host epithelial cell transcytosis, host nerve cell targeting and translocation of PMP1 light chain (LC) into host cytosol. Composed of 3 subdomains; the translocation domain (TD), and N-terminus and C-terminus of the receptor-binding domain (RBD), called HCN and HCC. This chain is Paraclostridial mosquitocidal protein 1, found in Paraclostridium bifermentans (Clostridium bifermentans).